We begin with the raw amino-acid sequence, 122 residues long: Large ribosomal subunit protein uL18 (122 aa).

It belongs to the universal ribosomal protein uL18 family. In terms of assembly, part of the 50S ribosomal subunit; part of the 5S rRNA/L5/L18/L25 subcomplex. Contacts the 5S and 23S rRNAs.

In terms of biological role, this is one of the proteins that bind and probably mediate the attachment of the 5S RNA into the large ribosomal subunit, where it forms part of the central protuberance. The polypeptide is Large ribosomal subunit protein uL18 (Trichlorobacter lovleyi (strain ATCC BAA-1151 / DSM 17278 / SZ) (Geobacter lovleyi)).